A 318-amino-acid polypeptide reads, in one-letter code: Ribosomal large subunit pseudouridine synthase B (318 aa).

In terms of domain architecture, S4 RNA-binding spans 3-75 (EKLQKILARA…VCRVLAYYKP (73 aa)). Aspartate 110 acts as the Nucleophile in catalysis. The interval 271–318 (AVKRHTEVSGRQVAGRQGSARKGSTRQNVGNAAPAATASRRSGPKKRG) is disordered.

The protein belongs to the pseudouridine synthase RsuA family.

It carries out the reaction uridine(2605) in 23S rRNA = pseudouridine(2605) in 23S rRNA. Responsible for synthesis of pseudouridine from uracil-2605 in 23S ribosomal RNA. The polypeptide is Ribosomal large subunit pseudouridine synthase B (rluB) (Yersinia pestis).